A 323-amino-acid chain; its full sequence is MKRAPVIPKHTLNTQPVEDTSLSTPAAPMVDSLIARVGVMARGNAITLPVCGRDVKFTLEVLRGDSVEKTSRVWSGNERDQELLTEDALDDLIPSFLLTGQQTPAFGRRVSGVIEIADGSRRRKAAALTESDYRVLVGELDDEQMAALSRLGNDYRPTSAYERGQRYASRLQNEFAGNISALADAENISRKIITRCINTAKLPKSVVALFSHPGELSARSGDALQKAFTDKEELLKQQASNLHEQKKAGVIFEAEEVITLLTSVLKTSSASRTSLSSRHQFAPGATVLYKGDKMVLNLDRSRVPTECIEKIEAILKELEKPAP.

Residues 1-20 (MKRAPVIPKHTLNTQPVEDT) are disordered. Polar residues predominate over residues 11–20 (TLNTQPVEDT). Positions 180 to 199 (SALADAENISRKIITRCINT) form a DNA-binding region, H-T-H motif.

Belongs to the ParB family.

Control of plasmid partitioning; required to recognize the cis-acting. Binds specifically with the DNA segment containing the sopC region. SopB is trans-acting. This chain is Protein SopB (sopB), found in Escherichia coli O157:H7.